The chain runs to 282 residues: Undecaprenyl-diphosphatase (282 aa).

The next 7 helical transmembrane spans lie at 40 to 60 (GAAF…MYFW), 85 to 105 (ARMG…GLLF), 115 to 135 (SLYW…LAEW), 153 to 173 (IGWK…IPGS), 193 to 213 (AARF…IFQL), 230 to 250 (LAAA…FLLS), and 258 to 278 (TIFI…LSTG).

Belongs to the UppP family.

The protein localises to the cell inner membrane. The catalysed reaction is di-trans,octa-cis-undecaprenyl diphosphate + H2O = di-trans,octa-cis-undecaprenyl phosphate + phosphate + H(+). Functionally, catalyzes the dephosphorylation of undecaprenyl diphosphate (UPP). Confers resistance to bacitracin. In Chlorobium phaeovibrioides (strain DSM 265 / 1930) (Prosthecochloris vibrioformis (strain DSM 265)), this protein is Undecaprenyl-diphosphatase.